The following is a 209-amino-acid chain: Probable E3 ubiquitin-protein ligase NleG7 (209 aa).

This sequence belongs to the NleG E3 ligase family. Two sizes of protein are detected in situ; only the smaller protein is secreted.

Its subcellular location is the secreted. The protein resides in the host cytoplasm. It catalyses the reaction S-ubiquitinyl-[E2 ubiquitin-conjugating enzyme]-L-cysteine + [acceptor protein]-L-lysine = [E2 ubiquitin-conjugating enzyme]-L-cysteine + N(6)-ubiquitinyl-[acceptor protein]-L-lysine.. Its function is as follows. Effector proteins function to alter host cell physiology and promote bacterial survival in host tissues. This protein is probably an E3 ubiquitin-protein ligase that interferes with the host's ubiquitination pathway and targets host proteins for proteasomal degradation. Mice infected with a strain of bacteria deleted for this gene were colonized less quickly by bacteria. The polypeptide is Probable E3 ubiquitin-protein ligase NleG7 (Citrobacter rodentium).